The chain runs to 286 residues: Plasma membrane ascorbate-dependent reductase CYBRD1 (286 aa).

Topologically, residues 1-7 (MAMEGYW) are cytoplasmic. The helical transmembrane segment at 8–32 (RFLALLGSALLVGFLSVIFALVWVL) threads the bilayer. In terms of domain architecture, Cytochrome b561 spans 15–220 (SALLVGFLSV…FGALIFWIVT (206 aa)). Residues 33–47 (HYREGLGWDGSALEF) are Extracellular-facing. Residues 48-69 (NWHPVLMVTGFVFIQGIAIIVY) form a helical membrane-spanning segment. Residues His-50, Arg-70, and Lys-79 each coordinate heme b. Residues 70–78 (RLPWTWKCS) lie on the Cytoplasmic side of the membrane. L-ascorbate contacts are provided by Lys-79 and Lys-83. Residues 79 to 105 (KLLMKSIHAGLNAVAAILAIISVVAVF) traverse the membrane as a helical segment. His-86 serves as a coordination point for heme b. Topologically, residues 106–118 (ENHNVNNIANMYS) are extracellular. His-108 is a binding site for Fe(3+). Heme b contacts are provided by residues 115-118 (NMYS) and His-120. A helical membrane pass occupies residues 119–144 (LHSWVGLIAVICYLLQLLSGFSVFLL). Over 145-151 (PWAPLSL) the chain is Cytoplasmic. Residue Arg-152 coordinates L-ascorbate. The chain crosses the membrane as a helical span at residues 152 to 179 (RAFLMPIHVYSGIVIFGTVIATALMGLT). His-159 and Glu-180 together coordinate heme b. The Extracellular portion of the chain corresponds to 180 to 197 (EKLIFSLRDPAYSTFPPE). The helical transmembrane segment at 198–222 (GVFVNTLGLLILVFGALIFWIVTRP) threads the bilayer. Over 223–286 (QWKRPKEPNS…LDEAGQRSTM (64 aa)) the chain is Cytoplasmic. Residue Lys-225 coordinates heme b. The interval 229–268 (EPNSTILHPNGGTEQGARGSMPAYSGNNMDKSDSELNSEV) is disordered. Ser-232 is subject to Phosphoserine. Position 285 is a phosphothreonine (Thr-285).

In terms of assembly, homodimer. It depends on heme b as a cofactor. In terms of tissue distribution, present in erythrocyte membranes (at protein level). Also expressed in respiratory epithelium.

The protein resides in the cell membrane. Its subcellular location is the apical cell membrane. It carries out the reaction Fe(3+)(out) + L-ascorbate(in) = monodehydro-L-ascorbate radical(in) + Fe(2+)(out) + H(+). It catalyses the reaction Cu(2+)(out) + L-ascorbate(in) = Cu(+)(out) + monodehydro-L-ascorbate radical(in) + H(+). The enzyme catalyses monodehydro-L-ascorbate radical(out) + L-ascorbate(in) = monodehydro-L-ascorbate radical(in) + L-ascorbate(out). With respect to regulation, activated by chelators like citrate, malate, and oxalate specially at alkaline pH. Functionally, plasma membrane reductase that uses cytoplasmic ascorbate as an electron donor to reduce extracellular Fe(3+) into Fe(2+). Probably functions in dietary iron absorption at the brush border of duodenal enterocytes by producing Fe(2+), the divalent form of iron that can be transported into enterocytes. It is also able to reduce extracellular monodehydro-L-ascorbate and may be involved in extracellular ascorbate regeneration by erythrocytes in blood. May also act as a ferrireductase in airway epithelial cells. May also function as a cupric transmembrane reductase. This chain is Plasma membrane ascorbate-dependent reductase CYBRD1, found in Homo sapiens (Human).